The following is a 47-amino-acid chain: Type II secretion system protein N (47 aa).

The protein belongs to the GSP N family.

The protein localises to the cell inner membrane. In terms of biological role, involved in a type II secretion system (T2SS, formerly general secretion pathway, GSP) for the export of proteins. This is Type II secretion system protein N (exeN) from Aeromonas salmonicida.